We begin with the raw amino-acid sequence, 196 residues long: MADLNSLDVLIQALRRLPGVGVKSASRMAFHLLQHDRPGALALSRALQVAADQMRHCERCHTFTQADICATCLDPRRDASKLCVVETPADQSALERTGAYHGLYFVLMGKLSPLDGIGPKDIGLKGLFDRACDGTVQEVILATNFTAEGEATAHVISEGLKSRGLRLTRLARGVPVGSELEYVDLGTIAHALLDRR.

The C4-type zinc finger occupies 57–72 (CERCHTFTQADICATC). Positions 80 to 175 (SKLCVVETPA…RLTRLARGVP (96 aa)) constitute a Toprim domain.

The protein belongs to the RecR family.

Functionally, may play a role in DNA repair. It seems to be involved in an RecBC-independent recombinational process of DNA repair. It may act with RecF and RecO. This Albidiferax ferrireducens (strain ATCC BAA-621 / DSM 15236 / T118) (Rhodoferax ferrireducens) protein is Recombination protein RecR.